The sequence spans 764 residues: 5-methyltetrahydropteroyltriglutamate--homocysteine methyltransferase (764 aa).

5-methyltetrahydropteroyltri-L-glutamate-binding positions include 16-19 (RELK) and Lys117. L-homocysteine contacts are provided by residues 442–444 (IGS) and Glu495. L-methionine is bound by residues 442–444 (IGS) and Glu495. 5-methyltetrahydropteroyltri-L-glutamate-binding positions include 526-527 (RC) and Trp572. Position 610 (Asp610) interacts with L-homocysteine. Position 610 (Asp610) interacts with L-methionine. 5-methyltetrahydropteroyltri-L-glutamate is bound at residue Glu616. His652, Cys654, and Glu676 together coordinate Zn(2+). His705 functions as the Proton donor in the catalytic mechanism. Cys737 contacts Zn(2+).

Belongs to the vitamin-B12 independent methionine synthase family. It depends on Zn(2+) as a cofactor.

The enzyme catalyses 5-methyltetrahydropteroyltri-L-glutamate + L-homocysteine = tetrahydropteroyltri-L-glutamate + L-methionine. The protein operates within amino-acid biosynthesis; L-methionine biosynthesis via de novo pathway; L-methionine from L-homocysteine (MetE route): step 1/1. In terms of biological role, catalyzes the transfer of a methyl group from 5-methyltetrahydrofolate to homocysteine resulting in methionine formation. The chain is 5-methyltetrahydropteroyltriglutamate--homocysteine methyltransferase from Bordetella bronchiseptica (strain ATCC BAA-588 / NCTC 13252 / RB50) (Alcaligenes bronchisepticus).